The following is a 469-amino-acid chain: Ubiquitin carboxyl-terminal hydrolase MINDY-1 (469 aa).

The tract at residues 1-105 (MEHHQPEHPA…RLQELPQSPR (105 aa)) is disordered. Residues 23–44 (ENHKVLSEPKEHPQDKDAKEAD) are compositionally biased toward basic and acidic residues. The residue at position 103 (S103) is a Phosphoserine. C137 (nucleophile) is an active-site residue. The Proton acceptor role is filled by H319. The interval 388 to 428 (QVDQDYLIALSLQQQQPPPQGTSGLSDLELAQQLQQEEYQQ) is ubiquitin-binding domain (UBD). Positions 401 to 469 (QQQPPPQGTS…PKQESDCVLL (69 aa)) are disordered. Residues 415 to 448 (LELAQQLQQEEYQQHQAAQAAPARAPSPQGRGAA) are compositionally biased toward low complexity. S441 carries the post-translational modification Phosphoserine. A compositionally biased stretch (basic and acidic residues) spans 453–469 (AAERRQRPKQESDCVLL).

It belongs to the MINDY deubiquitinase family. FAM63 subfamily.

The enzyme catalyses Thiol-dependent hydrolysis of ester, thioester, amide, peptide and isopeptide bonds formed by the C-terminal Gly of ubiquitin (a 76-residue protein attached to proteins as an intracellular targeting signal).. Functionally, hydrolase that can specifically remove 'Lys-48'-linked conjugated ubiquitin from proteins. Has exodeubiquitinase activity and has a preference for long polyubiquitin chains. May play a regulatory role at the level of protein turnover. This chain is Ubiquitin carboxyl-terminal hydrolase MINDY-1 (MINDY1), found in Bos taurus (Bovine).